We begin with the raw amino-acid sequence, 211 residues long: Protein-methionine-sulfoxide reductase heme-binding subunit MsrQ (211 aa).

5 consecutive transmembrane segments (helical) span residues 10–30 (WLKVCLHLAGLLPFLWLAWAI), 82–102 (LWCFAWATLHLTSYALLELGV), 116–136 (PYLTLGIISWVILLALAFTST), 153–173 (FVYLVAILAPIHYLWSVKIIS), and 178–198 (IYAGLAVLLLALRYKKLLSLF).

It belongs to the MsrQ family. As to quaternary structure, heterodimer of a catalytic subunit (MsrP) and a heme-binding subunit (MsrQ). The cofactor is FMN. It depends on heme b as a cofactor.

The protein localises to the cell inner membrane. Functionally, part of the MsrPQ system that repairs oxidized periplasmic proteins containing methionine sulfoxide residues (Met-O), using respiratory chain electrons. Thus protects these proteins from oxidative-stress damage caused by reactive species of oxygen and chlorine generated by the host defense mechanisms. MsrPQ is essential for the maintenance of envelope integrity under bleach stress, rescuing a wide series of structurally unrelated periplasmic proteins from methionine oxidation, including the primary periplasmic chaperone SurA and the lipoprotein Pal. MsrQ provides electrons for reduction to the reductase catalytic subunit MsrP, using the quinone pool of the respiratory chain. This is Protein-methionine-sulfoxide reductase heme-binding subunit MsrQ from Escherichia coli (strain UTI89 / UPEC).